The chain runs to 611 residues: 4-hydroxy-3-methylbut-2-en-1-yl diphosphate synthase (flavodoxin) (611 aa).

Residues Cys-520, Cys-523, Cys-554, and Glu-561 each contribute to the [4Fe-4S] cluster site.

Belongs to the IspG family. [4Fe-4S] cluster serves as cofactor.

It carries out the reaction (2E)-4-hydroxy-3-methylbut-2-enyl diphosphate + oxidized [flavodoxin] + H2O + 2 H(+) = 2-C-methyl-D-erythritol 2,4-cyclic diphosphate + reduced [flavodoxin]. The protein operates within isoprenoid biosynthesis; isopentenyl diphosphate biosynthesis via DXP pathway; isopentenyl diphosphate from 1-deoxy-D-xylulose 5-phosphate: step 5/6. Converts 2C-methyl-D-erythritol 2,4-cyclodiphosphate (ME-2,4cPP) into 1-hydroxy-2-methyl-2-(E)-butenyl 4-diphosphate. The protein is 4-hydroxy-3-methylbut-2-en-1-yl diphosphate synthase (flavodoxin) of Parabacteroides distasonis (strain ATCC 8503 / DSM 20701 / CIP 104284 / JCM 5825 / NCTC 11152).